Consider the following 880-residue polypeptide: Valine--tRNA ligase (880 aa).

A 'HIGH' region motif is present at residues 49-59 (PNVTGKLHLGH). The 'KMSKS' region signature appears at 525 to 529 (KMSKS). Lys-528 is an ATP binding site. Positions 809 to 879 (LAGLLDLEEE…AVRARIKELK (71 aa)) form a coiled coil.

Belongs to the class-I aminoacyl-tRNA synthetase family. ValS type 1 subfamily. In terms of assembly, monomer.

It is found in the cytoplasm. It carries out the reaction tRNA(Val) + L-valine + ATP = L-valyl-tRNA(Val) + AMP + diphosphate. Catalyzes the attachment of valine to tRNA(Val). As ValRS can inadvertently accommodate and process structurally similar amino acids such as threonine, to avoid such errors, it has a 'posttransfer' editing activity that hydrolyzes mischarged Thr-tRNA(Val) in a tRNA-dependent manner. This chain is Valine--tRNA ligase, found in Halalkalibacterium halodurans (strain ATCC BAA-125 / DSM 18197 / FERM 7344 / JCM 9153 / C-125) (Bacillus halodurans).